The primary structure comprises 148 residues: Cuticle protein CP1499 (148 aa).

Calcified shell.

The polypeptide is Cuticle protein CP1499 (Cancer pagurus (Rock crab)).